A 451-amino-acid chain; its full sequence is Phenylalanine--tRNA ligase, mitochondrial (451 aa).

Residues 157–160 (SAHQ), Arg179, 186–188 (QHY), and 193–195 (QLE) contribute to the substrate site. Lys202 carries the N6-acetyllysine modification. Substrate contacts are provided by Glu287 and Phe312. The 93-residue stretch at 358-450 (SKYPAVINDI…AVQLLGVEGR (93 aa)) folds into the FDX-ACB domain.

This sequence belongs to the class-II aminoacyl-tRNA synthetase family. Monomer.

The protein resides in the mitochondrion matrix. Its subcellular location is the mitochondrion. The enzyme catalyses tRNA(Phe) + L-phenylalanine + ATP = L-phenylalanyl-tRNA(Phe) + AMP + diphosphate + H(+). Functionally, is responsible for the charging of tRNA(Phe) with phenylalanine in mitochondrial translation. To a lesser extent, also catalyzes direct attachment of m-Tyr (an oxidized version of Phe) to tRNA(Phe), thereby opening the way for delivery of the misacylated tRNA to the ribosome and incorporation of ROS-damaged amino acid into proteins. The chain is Phenylalanine--tRNA ligase, mitochondrial (FARS2) from Homo sapiens (Human).